The chain runs to 47 residues: Protein PsbN (47 aa).

A helical membrane pass occupies residues 7-29; it reads VAISISCLLISFTGYALYTAFGN.

Belongs to the PsbN family.

The protein localises to the plastid membrane. Its function is as follows. May play a role in photosystem I and II biogenesis. This Aneura mirabilis (Parasitic liverwort) protein is Protein PsbN.